The chain runs to 205 residues: Thymidylate kinase (205 aa).

9-16 contacts ATP; sequence GPEGSGKT.

It belongs to the thymidylate kinase family.

It carries out the reaction dTMP + ATP = dTDP + ADP. Phosphorylation of dTMP to form dTDP in both de novo and salvage pathways of dTTP synthesis. The polypeptide is Thymidylate kinase (Staphylococcus aureus (strain NCTC 8325 / PS 47)).